The following is a 744-amino-acid chain: NADH-ubiquinone oxidoreductase 78 kDa subunit, mitochondrial (744 aa).

Positions 1-10 are enriched in polar residues; the sequence is MLRSTLSRSA. The tract at residues 1–26 is disordered; the sequence is MLRSTLSRSAWRTGRHQAARNASRAF. Residues 1-33 constitute a mitochondrion transit peptide; it reads MLRSTLSRSAWRTGRHQAARNASRAFSATAQRP. The 79-residue stretch at 34-112 folds into the 2Fe-2S ferredoxin-type domain; that stretch reads AEVELTIDGK…GMVVKTNSPL (79 aa). Residues cysteine 68, cysteine 79, cysteine 82, and cysteine 96 each contribute to the [2Fe-2S] cluster site. The 4Fe-4S His(Cys)3-ligated-type domain maps to 112–151; it reads LTHKAREGVMEFLLANHPLDCPICDQGGECDLQDQSMRYG. 8 residues coordinate [4Fe-4S] cluster: histidine 128, cysteine 132, cysteine 135, cysteine 141, cysteine 182, cysteine 185, cysteine 188, and cysteine 232. Residues 251–307 enclose the 4Fe-4S Mo/W bis-MGD-type domain; it reads LKKTESIDVLDGLGSNIRVDTRGLEVMRILPRLNDEVNEEWINDKTRFACDGLKTQR.

It belongs to the complex I 75 kDa subunit family. Complex I is composed of about 40 different subunits. Requires [2Fe-2S] cluster as cofactor. The cofactor is [4Fe-4S] cluster.

The protein localises to the mitochondrion inner membrane. The catalysed reaction is a ubiquinone + NADH + 5 H(+)(in) = a ubiquinol + NAD(+) + 4 H(+)(out). Its function is as follows. Core subunit of the mitochondrial membrane respiratory chain NADH dehydrogenase (Complex I) that is believed to belong to the minimal assembly required for catalysis. Complex I functions in the transfer of electrons from NADH to the respiratory chain. The immediate electron acceptor for the enzyme is believed to be ubiquinone. This is the largest subunit of complex I and it is a component of the iron-sulfur (IP) fragment of the enzyme. It may form part of the active site crevice where NADH is oxidized. The sequence is that of NADH-ubiquinone oxidoreductase 78 kDa subunit, mitochondrial (nuo78) from Neurospora crassa (strain ATCC 24698 / 74-OR23-1A / CBS 708.71 / DSM 1257 / FGSC 987).